Here is a 170-residue protein sequence, read N- to C-terminus: Disulfide bond formation protein B (170 aa).

Over 1-14 (MNDSTLALRRERRL) the chain is Cytoplasmic. A helical transmembrane segment spans residues 15 to 31 (LMLLGWVCIALLAGALY). Residues 32–49 (LQYVKNEDPCPLCIIQRY) lie on the Periplasmic side of the membrane. A disulfide bridge links cysteine 41 with cysteine 44. Residues 50–64 (FFAAIGIFAFLAAGI) form a helical membrane-spanning segment. Residues 65–71 (RNWRVIW) lie on the Cytoplasmic side of the membrane. A helical transmembrane segment spans residues 72-89 (VFELLIAIAAAGGVGTAA). The Periplasmic segment spans residues 90-144 (RHLSIQMNPGFSCGFDTLQPIVDSLPPAQWFPGMFKVAGLCETVYPPIFGILLPG). Cysteine 102 and cysteine 130 are joined by a disulfide. Residues 145–163 (WALIGFAVILVAVASSLWR) form a helical membrane-spanning segment. Residues 164 to 170 (HRRKLAG) lie on the Cytoplasmic side of the membrane.

This sequence belongs to the DsbB family.

The protein localises to the cell inner membrane. Its function is as follows. Required for disulfide bond formation in some periplasmic proteins. Acts by oxidizing the DsbA protein. This is Disulfide bond formation protein B from Burkholderia ambifaria (strain ATCC BAA-244 / DSM 16087 / CCUG 44356 / LMG 19182 / AMMD) (Burkholderia cepacia (strain AMMD)).